A 609-amino-acid polypeptide reads, in one-letter code: Glutamine--fructose-6-phosphate aminotransferase [isomerizing] (609 aa).

C2 (nucleophile; for GATase activity) is an active-site residue. The Glutamine amidotransferase type-2 domain maps to 2 to 218 (CGIVGAIAQR…EGDIAEITRR (217 aa)). 2 consecutive SIS domains span residues 286-426 (ADEL…LKGL) and 458-599 (LAED…VDQP). The For Fru-6P isomerization activity role is filled by K604.

As to quaternary structure, homodimer.

The protein resides in the cytoplasm. The catalysed reaction is D-fructose 6-phosphate + L-glutamine = D-glucosamine 6-phosphate + L-glutamate. Its function is as follows. Catalyzes the first step in hexosamine metabolism, converting fructose-6P into glucosamine-6P using glutamine as a nitrogen source. The polypeptide is Glutamine--fructose-6-phosphate aminotransferase [isomerizing] (Salmonella paratyphi A (strain ATCC 9150 / SARB42)).